A 413-amino-acid polypeptide reads, in one-letter code: Eukaryotic initiation factor 4A-9 (413 aa).

The Q motif motif lies at 40–68 (HSFDAMGLKENLLRGIYAYGFEKPSAIQQ). One can recognise a Helicase ATP-binding domain in the interval 71-241 (IVPFCKGLDV…RKFMNKPVRI (171 aa)). 84-91 (AQSGTGKT) contributes to the ATP binding site. The DEAD box signature appears at 189–192 (DEAD). One can recognise a Helicase C-terminal domain in the interval 252–413 (GIKQFYVNVD…ELPANVADLL (162 aa)).

This sequence belongs to the DEAD box helicase family. eIF4A subfamily. In terms of assembly, eIF4F is a multi-subunit complex, the composition of which varies with external and internal environmental conditions. It is composed of at least EIF4A, EIF4E and EIF4G.

The catalysed reaction is ATP + H2O = ADP + phosphate + H(+). Functionally, ATP-dependent RNA helicase which is a subunit of the eIF4F complex involved in cap recognition and is required for mRNA binding to ribosome. In the current model of translation initiation, eIF4A unwinds RNA secondary structures in the 5'-UTR of mRNAs which is necessary to allow efficient binding of the small ribosomal subunit, and subsequent scanning for the initiator codon. The chain is Eukaryotic initiation factor 4A-9 from Nicotiana tabacum (Common tobacco).